We begin with the raw amino-acid sequence, 90 residues long: Acylphosphatase (90 aa).

Residues 5-90 enclose the Acylphosphatase-like domain; that stretch reads CEKFVVSGIV…CREYQGFEIL (86 aa). Active-site residues include R20 and N38.

It belongs to the acylphosphatase family.

The catalysed reaction is an acyl phosphate + H2O = a carboxylate + phosphate + H(+). This chain is Acylphosphatase (acyP), found in Vibrio vulnificus (strain CMCP6).